Here is a 436-residue protein sequence, read N- to C-terminus: Histidine--tRNA ligase (436 aa).

The protein belongs to the class-II aminoacyl-tRNA synthetase family. As to quaternary structure, homodimer.

It localises to the cytoplasm. It carries out the reaction tRNA(His) + L-histidine + ATP = L-histidyl-tRNA(His) + AMP + diphosphate + H(+). This Psychrobacter sp. (strain PRwf-1) protein is Histidine--tRNA ligase.